Here is a 50-residue protein sequence, read N- to C-terminus: Toxic protein HokE (50 aa).

The chain crosses the membrane as a helical span at residues 5-25 (YALAAVIVLCLTVLGFTLLVG).

The protein belongs to the Hok/Gef family.

The protein localises to the cell inner membrane. In terms of biological role, toxic component of a type I toxin-antitoxin (TA) system; if it expressed it could be neutralized by antisense antitoxin RNA SokE. The polypeptide is Toxic protein HokE (Escherichia coli (strain K12)).